The following is a 755-amino-acid chain: Subtilisin-like protease 4 (755 aa).

An N-terminal signal peptide occupies residues 1-20; sequence MDYFLFIALTFLLTFHVHNA. Residues 41–119 enclose the Inhibitor I9 domain; sequence YIIHVTGPEG…ISAHPQRVLH (79 aa). Residues 128-611 form the Peptidase S8 domain; that stretch reads FLGLQQDTGV…SGHVNPSRAN (484 aa). Aspartate 153 functions as the Charge relay system in the catalytic mechanism. Asparagine 182 carries N-linked (GlcNAc...) asparagine glycosylation. Catalysis depends on histidine 217, which acts as the Charge relay system. N-linked (GlcNAc...) asparagine glycans are attached at residues asparagine 297, asparagine 325, asparagine 393, asparagine 468, and asparagine 529. The region spanning 376–461 is the PA domain; the sequence is PLAYAGKNGK…ATHVSYAAGI (86 aa). Serine 544 acts as the Charge relay system in catalysis. 2 N-linked (GlcNAc...) asparagine glycosylation sites follow: asparagine 706 and asparagine 727.

Belongs to the peptidase S8 family.

The protein localises to the secreted. Its subcellular location is the extracellular space. The protein resides in the apoplast. In terms of biological role, required for arbuscular mycorrhiza (AM) development during AM symbiosis with AM fungi (e.g. Glomeromycota intraradices). This chain is Subtilisin-like protease 4, found in Lotus japonicus (Lotus corniculatus var. japonicus).